Reading from the N-terminus, the 114-residue chain is MVIYEGNRFVAICRPGLLANYLNQVSPEYKGVINIYEGKAHYKINAVVARELAFQFLTFASCDIQVMGEALIAENEDDFINIFRKVYTERLIMKGAYIQSTAESIETAFRKVAQ.

It belongs to the apurinic/apyrimidinic endonuclease family. In terms of assembly, interacts with host Ung; this interaction allows the viral AP endonuclease to localize to newly formed AP sites and cleave them, leading to inhibition of bacterial growth.

Performs endonucleolytic cleavage at abasic sites, which are generated by the base-excision activity of host Ung. The cleavage generates a 5'-deoxyribose phosphate and 3'-hydroxyl end. The sites are specifically recognized through the formation of a complex with host Ung. The viral endonucleolytic activity damages the host DNA, blocks host DNA replication and induces cell division arrest. This may provide an advantage for the phage and save nucleotides for the viral replication since it specifically targets the host DNA, which possesses more misincorporated uracils than the viral genome. The protein is DNA-(apurinic or apyrimidinic site) endonuclease of Escherichia phage T5 (Enterobacteria phage T5).